The following is a 187-amino-acid chain: Shikimate kinase (187 aa).

19 to 24 (GSGKST) provides a ligand contact to ATP. S23 is a Mg(2+) binding site. Residues D41, R65, and G87 each coordinate substrate. R124 lines the ATP pocket. Residue R143 participates in substrate binding. Residue R160 participates in ATP binding.

It belongs to the shikimate kinase family. As to quaternary structure, monomer. Mg(2+) is required as a cofactor.

Its subcellular location is the cytoplasm. It catalyses the reaction shikimate + ATP = 3-phosphoshikimate + ADP + H(+). Its pathway is metabolic intermediate biosynthesis; chorismate biosynthesis; chorismate from D-erythrose 4-phosphate and phosphoenolpyruvate: step 5/7. Its function is as follows. Catalyzes the specific phosphorylation of the 3-hydroxyl group of shikimic acid using ATP as a cosubstrate. In Rippkaea orientalis (strain PCC 8801 / RF-1) (Cyanothece sp. (strain PCC 8801)), this protein is Shikimate kinase.